Here is an 856-residue protein sequence, read N- to C-terminus: DNA mismatch repair protein MutS (856 aa).

Residue 607 to 614 (GPNMSGKS) participates in ATP binding.

This sequence belongs to the DNA mismatch repair MutS family.

In terms of biological role, this protein is involved in the repair of mismatches in DNA. It is possible that it carries out the mismatch recognition step. This protein has a weak ATPase activity. The protein is DNA mismatch repair protein MutS of Lactobacillus delbrueckii subsp. bulgaricus (strain ATCC 11842 / DSM 20081 / BCRC 10696 / JCM 1002 / NBRC 13953 / NCIMB 11778 / NCTC 12712 / WDCM 00102 / Lb 14).